Here is a 394-residue protein sequence, read N- to C-terminus: Flavohemoprotein (394 aa).

In terms of domain architecture, Globin spans 1 to 136 (MLSENTINIV…LANVFIQREE (136 aa)). Residue H85 coordinates heme b. Catalysis depends on charge relay system residues Y95 and E135. Residues 147-394 (GGWRGLREFE…YECFGPHKVV (248 aa)) are reductase. The FAD-binding FR-type domain occupies 150-255 (RGLREFELVE…AAPAGDFFLD (106 aa)). FAD contacts are provided by residues Y188 and 204–207 (RQYS). 268–273 (GVGLTP) is an NADP(+) binding site. Position 387-390 (387-390 (CFGP)) interacts with FAD.

The protein belongs to the globin family. Two-domain flavohemoproteins subfamily. In the C-terminal section; belongs to the flavoprotein pyridine nucleotide cytochrome reductase family. The cofactor is heme b. Requires FAD as cofactor.

It catalyses the reaction 2 nitric oxide + NADPH + 2 O2 = 2 nitrate + NADP(+) + H(+). It carries out the reaction 2 nitric oxide + NADH + 2 O2 = 2 nitrate + NAD(+) + H(+). In terms of biological role, is involved in NO detoxification in an aerobic process, termed nitric oxide dioxygenase (NOD) reaction that utilizes O(2) and NAD(P)H to convert NO to nitrate, which protects the bacterium from various noxious nitrogen compounds. Therefore, plays a central role in the inducible response to nitrosative stress. This is Flavohemoprotein from Vibrio vulnificus (strain CMCP6).